A 743-amino-acid polypeptide reads, in one-letter code: Cytosolic neutral trehalase (743 aa).

Residues Asp95, Asp97, Asn99, Gln101, and Asp106 each coordinate Ca(2+). Residues Arg285, Trp292–Asp293, Asn329, Arg338–Gln340, Glu405, Arg454, and Gly457 each bind substrate. Residues Asp459 and Glu664 each act as proton donor/acceptor in the active site.

The protein belongs to the glycosyl hydrolase 37 family. Ca(2+) is required as a cofactor.

It is found in the cytoplasm. It carries out the reaction alpha,alpha-trehalose + H2O = alpha-D-glucose + beta-D-glucose. It participates in carbohydrate degradation. In terms of biological role, hydrolyzes intracellular trehalose to glucose. In Beauveria bassiana (strain ARSEF 2860) (White muscardine disease fungus), this protein is Cytosolic neutral trehalase.